The chain runs to 332 residues: Terpene synthase 1 (332 aa).

The DDxx(x)D/E motif signature appears at 81 to 86 (DDGLDA). The short motif at 221 to 229 (NDLVSYEKE) is the NDxxSxxxD/E motif element.

It belongs to the terpene synthase family.

The catalysed reaction is (2E,6E)-farnesyl diphosphate = (2S,3R,6S,9S)-(-)-protoillud-7-ene + diphosphate. In terms of biological role, terpene synthase that converts its substrate farnesyl diphosphate (FPP) into the sesquiterpene protoillud-7-ene. In Acytostelium subglobosum (Slime mold), this protein is Terpene synthase 1.